Consider the following 173-residue polypeptide: ATP synthase subunit b 1 (173 aa).

Residues 15–37 (TFWVTVAVLIFLAFFGRKIVGAI) traverse the membrane as a helical segment.

This sequence belongs to the ATPase B chain family. In terms of assembly, F-type ATPases have 2 components, F(1) - the catalytic core - and F(0) - the membrane proton channel. F(1) has five subunits: alpha(3), beta(3), gamma(1), delta(1), epsilon(1). F(0) has three main subunits: a(1), b(2) and c(10-14). The alpha and beta chains form an alternating ring which encloses part of the gamma chain. F(1) is attached to F(0) by a central stalk formed by the gamma and epsilon chains, while a peripheral stalk is formed by the delta and b chains.

Its subcellular location is the cell inner membrane. Functionally, f(1)F(0) ATP synthase produces ATP from ADP in the presence of a proton or sodium gradient. F-type ATPases consist of two structural domains, F(1) containing the extramembraneous catalytic core and F(0) containing the membrane proton channel, linked together by a central stalk and a peripheral stalk. During catalysis, ATP synthesis in the catalytic domain of F(1) is coupled via a rotary mechanism of the central stalk subunits to proton translocation. Its function is as follows. Component of the F(0) channel, it forms part of the peripheral stalk, linking F(1) to F(0). This chain is ATP synthase subunit b 1, found in Acidiphilium cryptum (strain JF-5).